The sequence spans 97 residues: Aspartyl/glutamyl-tRNA(Asn/Gln) amidotransferase subunit C (97 aa).

A disordered region spans residues 59–78; that stretch reads STGKLRPDEPAQPLSRDDAL. Basic and acidic residues predominate over residues 63–78; it reads LRPDEPAQPLSRDDAL.

Belongs to the GatC family. As to quaternary structure, heterotrimer of A, B and C subunits.

The enzyme catalyses L-glutamyl-tRNA(Gln) + L-glutamine + ATP + H2O = L-glutaminyl-tRNA(Gln) + L-glutamate + ADP + phosphate + H(+). It carries out the reaction L-aspartyl-tRNA(Asn) + L-glutamine + ATP + H2O = L-asparaginyl-tRNA(Asn) + L-glutamate + ADP + phosphate + 2 H(+). In terms of biological role, allows the formation of correctly charged Asn-tRNA(Asn) or Gln-tRNA(Gln) through the transamidation of misacylated Asp-tRNA(Asn) or Glu-tRNA(Gln) in organisms which lack either or both of asparaginyl-tRNA or glutaminyl-tRNA synthetases. The reaction takes place in the presence of glutamine and ATP through an activated phospho-Asp-tRNA(Asn) or phospho-Glu-tRNA(Gln). The chain is Aspartyl/glutamyl-tRNA(Asn/Gln) amidotransferase subunit C from Metallosphaera sedula (strain ATCC 51363 / DSM 5348 / JCM 9185 / NBRC 15509 / TH2).